The chain runs to 938 residues: Isoleucine--tRNA ligase (938 aa).

Residues 61 to 71 carry the 'HIGH' region motif; it reads PYANGDIHLGT. Glu559 lines the L-isoleucyl-5'-AMP pocket. The 'KMSKS' region signature appears at 601–605; that stretch reads KMSKS. ATP is bound at residue Lys604. Positions 904, 907, 923, and 926 each coordinate Zn(2+).

This sequence belongs to the class-I aminoacyl-tRNA synthetase family. IleS type 1 subfamily. As to quaternary structure, monomer. The cofactor is Zn(2+).

The protein localises to the cytoplasm. It carries out the reaction tRNA(Ile) + L-isoleucine + ATP = L-isoleucyl-tRNA(Ile) + AMP + diphosphate. Its function is as follows. Catalyzes the attachment of isoleucine to tRNA(Ile). As IleRS can inadvertently accommodate and process structurally similar amino acids such as valine, to avoid such errors it has two additional distinct tRNA(Ile)-dependent editing activities. One activity is designated as 'pretransfer' editing and involves the hydrolysis of activated Val-AMP. The other activity is designated 'posttransfer' editing and involves deacylation of mischarged Val-tRNA(Ile). This is Isoleucine--tRNA ligase from Symbiobacterium thermophilum (strain DSM 24528 / JCM 14929 / IAM 14863 / T).